Consider the following 45-residue polypeptide: MTKRTLGGTVRKQKRTSGFRARMRSHTGQNVIRARRKKGRHRLTV.

Residues 1 to 45 (MTKRTLGGTVRKQKRTSGFRARMRSHTGQNVIRARRKKGRHRLTV) form a disordered region. Composition is skewed to basic residues over residues 11-25 (RKQK…RMRS) and 33-45 (RARR…RLTV).

The protein belongs to the bacterial ribosomal protein bL34 family.

This is Large ribosomal subunit protein bL34 from Picosynechococcus sp. (strain ATCC 27264 / PCC 7002 / PR-6) (Agmenellum quadruplicatum).